The following is a 351-amino-acid chain: uncharacterized protein (351 aa).

5 residues coordinate Mn(2+): Asp-215, Asp-226, His-290, Glu-319, and Glu-333.

It belongs to the peptidase M24B family. Mn(2+) is required as a cofactor.

This is an uncharacterized protein from Staphylococcus aureus (strain MSSA476).